A 139-amino-acid chain; its full sequence is Small ribosomal subunit protein uS11 (139 aa).

The segment at 118-139 is disordered; that stretch reads EDVTPIPHDGTRPKGGRRGRRV.

Belongs to the universal ribosomal protein uS11 family. As to quaternary structure, part of the 30S ribosomal subunit.

Located on the platform of the 30S subunit. In Thermococcus sibiricus (strain DSM 12597 / MM 739), this protein is Small ribosomal subunit protein uS11.